The following is a 1384-amino-acid chain: Hepatocyte growth factor receptor (1384 aa).

The N-terminal stretch at 1–24 (MKAPAVLAPGILVLLFTFVQKSNG) is a signal peptide. At 25–933 (ECKEALVKSR…VIVQPDQNFT (909 aa)) the chain is on the extracellular side. Residues 27 to 516 (KEALVKSRMN…TGKKITKIPL (490 aa)) form the Sema domain. N45 carries an N-linked (GlcNAc...) asparagine glycan. 4 disulfide bridges follow: C95-C101, C98-C160, C133-C141, and C173-C176. A glycan (N-linked (GlcNAc...) asparagine) is linked at N106. N149 is a glycosylation site (N-linked (GlcNAc...) asparagine). Residues N203 and N359 are each glycosylated (N-linked (GlcNAc...) asparagine). 2 cysteine pairs are disulfide-bonded: C299/C364 and C386/C398. 2 N-linked (GlcNAc...) asparagine glycosylation sites follow: N400 and N406. 4 disulfides stabilise this stretch: C521/C539, C527/C562, C530/C546, and C542/C552. IPT/TIG domains are found at residues 564–656 (PTIY…FSYV), 658–740 (PIIT…FIYR), and 743–837 (PIVY…LIYV). O-linked (Man) threonine glycosylation occurs at T583. 2 N-linked (GlcNAc...) asparagine glycosylation sites follow: N608 and N636. O-linked (Man) threonine glycans are attached at residues T677 and T762. N-linked (GlcNAc...) asparagine glycans are attached at residues N786, N880, and N931. Residues 934 to 956 (GLIVGVVSISIILLLLLGLFLWL) form a helical membrane-spanning segment. Residues 957–1384 (KKRKQIKDLG…NVSGEDDDDT (428 aa)) are Cytoplasmic-facing. S967 carries the phosphoserine modification. A Phosphothreonine modification is found at T978. Phosphoserine occurs at positions 991, 998, and 1001. Y1004 is subject to Phosphotyrosine. A Protein kinase domain is found at 1079-1346 (VHFNEVIGRG…RISVIFSTFI (268 aa)). ATP is bound by residues 1085–1093 (IGRGHFGCV) and K1111. The active-site Proton acceptor is D1205. The segment at 1213-1382 (LDEKFTVKVA…QDNVSGEDDD (170 aa)) is interaction with RANBP9. At Y1231 the chain carries Phosphotyrosine. Phosphotyrosine; by autocatalysis is present on residues Y1235 and Y1236. The residue at position 1290 (T1290) is a Phosphothreonine. Residues 1321-1360 (WHPKAELRPSFSELVSRISVIFSTFIGEHYVHVNATYVNV) are interaction with MUC20. Y1350 and Y1357 each carry phosphotyrosine; by autocatalysis. Position 1366 is a phosphotyrosine (Y1366).

This sequence belongs to the protein kinase superfamily. Tyr protein kinase family. In terms of assembly, heterodimer made of an alpha chain (50 kDa) and a beta chain (145 kDa) which are disulfide linked. Binds PLXNB1. Interacts when phosphorylated with downstream effectors including STAT3, PIK3R1, SRC, PCLG1, GRB2 and GAB1. Interacts with SPSB1, SPSB2 and SPSB4. Interacts with INPP5D/SHIP1. When phosphorylated at Tyr-1357, interacts with INPPL1/SHIP2. Interacts with RANBP9 and RANBP10, as well as SPSB1, SPSB2, SPSB3 and SPSB4. SPSB1 binding occurs in the presence and in the absence of HGF, however HGF treatment has a positive effect on this interaction. Interacts with MUC20; prevents interaction with GRB2 and suppresses hepatocyte growth factor-induced cell proliferation. Interacts with GRB10. Interacts with PTPN1 and PTPN2. Interacts with HSP90AA1 and HSP90AB1; the interaction suppresses MET kinase activity. Interacts with tensin TNS3. Interacts (when phosphorylated) with tensin TNS4 (via SH2 domain); the interaction increases MET protein stability by inhibiting MET endocytosis and subsequent lysosomal degradation. Autophosphorylated in response to ligand binding on Tyr-1235 and Tyr-1236 in the kinase domain leading to further phosphorylation of Tyr-1350 and Tyr-1357 in the C-terminal multifunctional docking site. Dephosphorylated by PTPRJ at Tyr-1350 and Tyr-1366. Dephosphorylated by PTPN1 and PTPN2. In terms of processing, ubiquitinated. Ubiquitination by CBL regulates the receptor stability and activity through proteasomal degradation. Post-translationally, O-mannosylation of IPT/TIG domains by TMEM260 is required for protein maturation. O-mannosylated residues are composed of single mannose glycans that are not elongated or modified. As to expression, expressed in many tissues, including liver, lung, heart, spleen and mammary gland.

Its subcellular location is the membrane. It catalyses the reaction L-tyrosyl-[protein] + ATP = O-phospho-L-tyrosyl-[protein] + ADP + H(+). In its inactive state, the C-terminal tail interacts with the catalytic domain and inhibits the kinase activity. Upon ligand binding, the C-terminal tail is displaced and becomes phosphorylated, thus increasing the kinase activity. Receptor tyrosine kinase that transduces signals from the extracellular matrix into the cytoplasm by binding to hepatocyte growth factor/HGF ligand. Regulates many physiological processes including proliferation, scattering, morphogenesis and survival. Ligand binding at the cell surface induces autophosphorylation of MET on its intracellular domain that provides docking sites for downstream signaling molecules. Following activation by ligand, interacts with the PI3-kinase subunit PIK3R1, PLCG1, SRC, GRB2, STAT3 or the adapter GAB1. Recruitment of these downstream effectors by MET leads to the activation of several signaling cascades including the RAS-ERK, PI3 kinase-AKT, or PLCgamma-PKC. The RAS-ERK activation is associated with the morphogenetic effects while PI3K/AKT coordinates prosurvival effects. During embryonic development, MET signaling plays a role in gastrulation, development and migration of muscles and neuronal precursors, angiogenesis and kidney formation. In adults, participates in wound healing as well as organ regeneration and tissue remodeling. Also promotes differentiation and proliferation of hematopoietic cells. The polypeptide is Hepatocyte growth factor receptor (MET) (Bos taurus (Bovine)).